The primary structure comprises 758 residues: Ferrichrome receptor FcuA (758 aa).

Positions 1–36 (MNQTISSRAPQKRLAPRLLCVMIGAALGTLSASSWA) are cleaved as a signal peptide. The TonB box signature appears at 66–73 (DTITVVGA). Residues 106 to 216 (DARNVPFNVI…VGGMINLEPK (111 aa)) enclose the TBDR plug domain. The TBDR beta-barrel domain occupies 221 to 758 (TPLTRVTVDY…ALKLSVSMDF (538 aa)). The TonB C-terminal box motif lies at 741 to 758 (YIYQGDPRALKLSVSMDF).

It belongs to the TonB-dependent receptor family.

Its subcellular location is the cell outer membrane. In terms of biological role, receptor for the hydroxamate siderophore, ferrichrome. Binds also to most other ferrichrome derivatives except enantio ferrichrome and ferric rhodotorulate. The chain is Ferrichrome receptor FcuA (fcuA) from Yersinia enterocolitica.